We begin with the raw amino-acid sequence, 105 residues long: Small ribosomal subunit protein eS24 (105 aa).

It belongs to the eukaryotic ribosomal protein eS24 family.

The polypeptide is Small ribosomal subunit protein eS24 (Ignicoccus hospitalis (strain KIN4/I / DSM 18386 / JCM 14125)).